Consider the following 115-residue polypeptide: U3-lycotoxin-Ls1a (115 aa).

Positions 1–20 (MKFVLLFGVFLVTLFSYSSA) are cleaved as a signal peptide. Residues 21 to 44 (EMLDDFGQADEDELLSLIEKEEAR) constitute a propeptide that is removed on maturation. Disulfide bonds link Cys48–Cys63, Cys55–Cys72, Cys62–Cys87, and Cys74–Cys85.

The protein belongs to the neurotoxin 19 (CSTX) family. 01 subfamily. Expressed by the venom gland.

The protein resides in the secreted. The polypeptide is U3-lycotoxin-Ls1a (Lycosa singoriensis (Wolf spider)).